The following is a 250-amino-acid chain: Ubiquinone/menaquinone biosynthesis C-methyltransferase UbiE (250 aa).

S-adenosyl-L-methionine-binding positions include T73, D94, 122–123 (NA), and S139.

Belongs to the class I-like SAM-binding methyltransferase superfamily. MenG/UbiE family.

The catalysed reaction is a 2-demethylmenaquinol + S-adenosyl-L-methionine = a menaquinol + S-adenosyl-L-homocysteine + H(+). The enzyme catalyses a 2-methoxy-6-(all-trans-polyprenyl)benzene-1,4-diol + S-adenosyl-L-methionine = a 5-methoxy-2-methyl-3-(all-trans-polyprenyl)benzene-1,4-diol + S-adenosyl-L-homocysteine + H(+). Its pathway is quinol/quinone metabolism; menaquinone biosynthesis; menaquinol from 1,4-dihydroxy-2-naphthoate: step 2/2. It participates in cofactor biosynthesis; ubiquinone biosynthesis. Methyltransferase required for the conversion of demethylmenaquinol (DMKH2) to menaquinol (MKH2) and the conversion of 2-polyprenyl-6-methoxy-1,4-benzoquinol (DDMQH2) to 2-polyprenyl-3-methyl-6-methoxy-1,4-benzoquinol (DMQH2). This is Ubiquinone/menaquinone biosynthesis C-methyltransferase UbiE from Francisella tularensis subsp. mediasiatica (strain FSC147).